Here is a 140-residue protein sequence, read N- to C-terminus: Putative pre-16S rRNA nuclease (140 aa).

This sequence belongs to the YqgF nuclease family.

Its subcellular location is the cytoplasm. Its function is as follows. Could be a nuclease involved in processing of the 5'-end of pre-16S rRNA. The sequence is that of Putative pre-16S rRNA nuclease from Halalkalibacterium halodurans (strain ATCC BAA-125 / DSM 18197 / FERM 7344 / JCM 9153 / C-125) (Bacillus halodurans).